Here is a 197-residue protein sequence, read N- to C-terminus: Gastrula zinc finger protein XlCGF17.1 (197 aa).

7 consecutive C2H2-type zinc fingers follow at residues 6-28 (ISCS…QMTH), 34-56 (YSCS…QKIH), 62-84 (FSCS…HRTH), 90-112 (FFCS…RRTH), 118-140 (FSCS…YRTH), 146-169 (FSCS…RRSH), and 175-197 (FSCS…LRTH).

Belongs to the krueppel C2H2-type zinc-finger protein family.

It is found in the nucleus. In terms of biological role, may be involved in transcriptional regulation. In Xenopus laevis (African clawed frog), this protein is Gastrula zinc finger protein XlCGF17.1.